The chain runs to 504 residues: MKEFKRYLELDRSQQHDFVYPLLFQEYIYVLAHDHGLNRSILLENADYDNKFSLLIVKRLITQMDQQNHLIFSPNDSNQNPFLGHNTNLYSQMILEGFAVVVEIPFSLRLISSLEGKETVKSHKLRSIHSIFPFLEDKFSRLNYVLDILIPHSIHLEILVQTLRYWVKDASSLHLLRFFLHEYRNWNTRITPKESSFSFSKRNQRFFLFLYNFHVCESESIFVFLRNQSSHLRSISSGTFLERIYFYGKIEHFVKVFTKDFQDILWLFKDPFMHYVRYQGNSILASKGTSLLMNKWKYYLVNFWQCYFYMWCQPGRIQINQLSNHSLDFLGYLSSVRLNPSMVRSQMLENSFLIGNAIKKFDTIVPIIPLIGSLYKAKFCNVLGHPVSKPVWADLSDSDIIDRFGRIYRNLSHYHTGSLKKTSLYRIKYILRLSCARTLARKHRSTVRAFLKRLGSELLEEFFTEEEQVFDLTFQETYSTSQGLSRGRIWYLDIICINDLANHE.

It belongs to the intron maturase 2 family. MatK subfamily.

It localises to the plastid. The protein localises to the chloroplast. Its function is as follows. Usually encoded in the trnK tRNA gene intron. Probably assists in splicing its own and other chloroplast group II introns. This chain is Maturase K, found in Actinidia deliciosa (Kiwi).